A 565-amino-acid polypeptide reads, in one-letter code: MGLYPLIWLSLAACTAWGYPSSPPVVNTVKGKVLGKYVNLEGFTQPVAVFLGVPFAKPPLGSLRFAPPQPAEPWSFVKNTTSYPPMCSQDAVGGQVLSELFTNRKENIPLQFSEDCLYLNIYTPADLTKNSRLPVMVWIHGGGLVVGGASTYDGLALSAHENVVVVTIQYRLGIWGFFSTGDEHSRGNWGHLDQVAALRWVQDNIANFGGNPGSVTIFGESAGGFSVSVLVLSPLAKNLFHRAISESGVSLTAALITTDVKPIAGLVATLSGCKTTTSAVMVHCLRQKTEDELLETSLKLNLFKLDLLGNPKESYPFLPTVIDGVVLPKAPEEILAEKSFSTVPYIVGINKQEFGWIIPTLMGYPLAEGKLDQKTANSLLWKSYPTLKISENMIPVVAEKYLGGTDDLTKKKDLFQDLMADVVFGVPSVIVSRSHRDAGASTYMYEFEYRPSFVSAMRPKAVIGDHGDEIFSVFGSPFLKDGASEEETNLSKMVMKFWANFARNGNPNGGGLPHWPEYDQKEGYLKIGASTQAAQRLKDKEVSFWAELRAKESAQRPSHREHVEL.

Positions 1–18 (MGLYPLIWLSLAACTAWG) are cleaved as a signal peptide. N79 carries N-linked (GlcNAc...) asparagine glycosylation. C87 and C116 are oxidised to a cystine. S221 (acyl-ester intermediate) is an active-site residue. The cysteines at positions 273 and 284 are disulfide-linked. E353 serves as the catalytic Charge relay system. Position 382 is an N6-succinyllysine (K382). H466 serves as the catalytic Charge relay system. An N-linked (GlcNAc...) asparagine glycan is attached at N489. A Prevents secretion from ER motif is present at residues 562 to 565 (HVEL).

This sequence belongs to the type-B carboxylesterase/lipase family. As to quaternary structure, homotrimer. Highest expression occurs in liver with lower levels in adipose tissue, kidney, heart, intestine, lung, testis and thymus.

The protein resides in the endoplasmic reticulum lumen. The protein localises to the cytoplasm. It localises to the cytosol. Its subcellular location is the lipid droplet. It is found in the microsome. The catalysed reaction is a carboxylic ester + H2O = an alcohol + a carboxylate + H(+). The enzyme catalyses a long-chain fatty acyl ethyl ester + H2O = a long-chain fatty acid + ethanol + H(+). It catalyses the reaction all-trans-retinyl hexadecanoate + H2O = all-trans-retinol + hexadecanoate + H(+). Functionally, major lipase in white adipose tissue. Involved in the metabolism of xenobiotics and of natural substrates. Hydrolyzes triacylglycerols and monoacylglycerols, with a preference for monoacylglycerols. The susceptibility of the substrate increases with decreasing acyl chain length of the fatty acid moiety. Catalyzes the synthesis of fatty acid ethyl esters. Hydrolyzes retinyl esters. The chain is Carboxylesterase 1D from Mus musculus (Mouse).